Consider the following 345-residue polypeptide: MMNNNGNQVSNLSNALRQVNIGNRNSNTTTDQSNINFEFPSGVNSNNSVQNSNNGRNGTQNNNNENSIKDTIEQHRQQQQAFSDMSHVEYSRITKFFQEQPLEGYTLFSHRSAPNGFKVAIVLSELGFHYNTIFLDFNLGEHRAPEFVSVNPNARVPALIDHNMDNLSIWESGAILLHLVNKYYKETGNPLLWSDDLADQSQINAWLFFQTSGHAPMIGQALHFRYFHSQKIASAVERYTDEVRRVYGVVEMALAERREALVMELDTENAAAYSAGTTPMSQSRFFDYPVWLVGDKLTIADLAFVPWNNVVDRIGINVKIEFPEVYKWTKHMMRRPAVIKALRGE.

The span at 22–36 (GNRNSNTTTDQSNIN) shows a compositional bias: polar residues. Residues 22–66 (GNRNSNTTTDQSNINFEFPSGVNSNNSVQNSNNGRNGTQNNNNEN) form a disordered region. Positions 41 to 66 (SGVNSNNSVQNSNNGRNGTQNNNNEN) are enriched in low complexity. In terms of domain architecture, GST N-terminal spans 103-187 (EGYTLFSHRS…HLVNKYYKET (85 aa)). Positions 196–345 (DLADQSQINA…PAVIKALRGE (150 aa)) constitute a GST C-terminal domain.

Belongs to the GST superfamily. Homodimer.

Functionally, plays an important role in the cellular response to the nitrogen source. URE2 gene plays a major part in the repression of GLN1 and GDH2 genes by glutamine, and is required for the inactivation of glutamine synthetase. URE2 gene product may catalytically inactivate GLN3 in response to an increase in the intracellular concentration of glutamine. This is Protein URE2 (URE2) from Saccharomyces bayanus (Yeast).